We begin with the raw amino-acid sequence, 207 residues long: MKLQGFVLLISGPSGAGKSTLLKKLFDEFEDELYFSISSTTRKPREGEKNGIHYHFISHEEFQKGIDSDHFLEWARVHENFYGTSLKHTQNALDNGKIVVFDIDVQGFKIARKKMADKIVSVFITTKNKDELKKRLIKRNTDTIIQLEKRLQNASDEMKELSEYDYLIINDELKQSYEALRAILIAHKFRTKGQNLGQIQNIWNEGE.

The 181-residue stretch at 5–185 (GFVLLISGPS…SYEALRAILI (181 aa)) folds into the Guanylate kinase-like domain. ATP is bound at residue 12–19 (GPSGAGKS).

This sequence belongs to the guanylate kinase family.

The protein localises to the cytoplasm. It carries out the reaction GMP + ATP = GDP + ADP. In terms of biological role, essential for recycling GMP and indirectly, cGMP. The chain is Guanylate kinase (gmk) from Campylobacter jejuni subsp. jejuni serotype O:2 (strain ATCC 700819 / NCTC 11168).